A 140-amino-acid chain; its full sequence is Protein E6 (140 aa).

2 zinc fingers span residues 27-63 and 100-136; these read CIFC…CSEC and CICC…CRNC.

This sequence belongs to the papillomaviridae E6 protein family. As to quaternary structure, forms homodimers. Interacts with ubiquitin-protein ligase UBE3A/E6-AP; this interaction stimulates UBE3A ubiquitin activity. Interacts with host BAK1.

It is found in the host cytoplasm. Its subcellular location is the host nucleus. Its function is as follows. Plays a major role in the induction and maintenance of cellular transformation. E6 associates with host UBE3A/E6-AP ubiquitin-protein ligase and modulates its activity. Protects host keratinocytes from apoptosis by mediating the degradation of host BAK1. May also inhibit host immune response. The polypeptide is Protein E6 (Human papillomavirus 4).